Consider the following 324-residue polypeptide: Thiamine thiazole synthase (324 aa).

Substrate-binding positions include C86, 107 to 108, G115, and V180; that span reads EA. C213 carries the post-translational modification 2,3-didehydroalanine (Cys). Substrate-binding positions include D215, H230, M282, and 292-294; that span reads RMG.

This sequence belongs to the THI4 family. In terms of assembly, homooctamer. Fe cation is required as a cofactor. During the catalytic reaction, a sulfide is transferred from Cys-213 to a reaction intermediate, generating a dehydroalanine residue.

It localises to the cytoplasm. Its subcellular location is the nucleus. It catalyses the reaction [ADP-thiazole synthase]-L-cysteine + glycine + NAD(+) = [ADP-thiazole synthase]-dehydroalanine + ADP-5-ethyl-4-methylthiazole-2-carboxylate + nicotinamide + 3 H2O + 2 H(+). In terms of biological role, involved in biosynthesis of the thiamine precursor thiazole. Catalyzes the conversion of NAD and glycine to adenosine diphosphate 5-(2-hydroxyethyl)-4-methylthiazole-2-carboxylic acid (ADT), an adenylated thiazole intermediate. The reaction includes an iron-dependent sulfide transfer from a conserved cysteine residue of the protein to a thiazole intermediate. The enzyme can only undergo a single turnover, which suggests it is a suicide enzyme. May have additional roles in adaptation to various stress conditions and in DNA damage tolerance. The protein is Thiamine thiazole synthase (sti35) of Fusarium solani subsp. phaseoli (Nectria haematococca).